The following is an 873-amino-acid chain: Aminopeptidase M1-D (873 aa).

The segment at L96–V203 is required for membrane association. Substrate contacts are provided by residues E136 and G269–N273. H305 is a binding site for Zn(2+). The active-site Proton acceptor is E306. Zn(2+) is bound by residues H309 and E328. The short motif at L721 to L722 is the Dileucine internalization motif element.

Belongs to the peptidase M1 family. In terms of assembly, homodimer. Zn(2+) serves as cofactor.

It is found in the membrane. The protein localises to the microsome membrane. The protein resides in the cytoplasm. The enzyme catalyses Release of an N-terminal amino acid, Xaa-|-Yaa- from a peptide, amide or arylamide. Xaa is preferably Ala, but may be most amino acids including Pro (slow action). When a terminal hydrophobic residue is followed by a prolyl residue, the two may be released as an intact Xaa-Pro dipeptide.. This chain is Aminopeptidase M1-D, found in Oryza sativa subsp. japonica (Rice).